The chain runs to 309 residues: MEMO1 family protein C4H3.04c (309 aa).

Belongs to the MEMO1 family.

The polypeptide is MEMO1 family protein C4H3.04c (Schizosaccharomyces pombe (strain 972 / ATCC 24843) (Fission yeast)).